Reading from the N-terminus, the 301-residue chain is Recombination-associated protein RdgC (301 aa).

It belongs to the RdgC family.

The protein resides in the cytoplasm. It is found in the nucleoid. May be involved in recombination. This is Recombination-associated protein RdgC from Xanthomonas oryzae pv. oryzae (strain KACC10331 / KXO85).